Consider the following 90-residue polypeptide: Small ribosomal subunit protein uS19 (90 aa).

The protein belongs to the universal ribosomal protein uS19 family.

Protein S19 forms a complex with S13 that binds strongly to the 16S ribosomal RNA. The polypeptide is Small ribosomal subunit protein uS19 (Methylococcus capsulatus (strain ATCC 33009 / NCIMB 11132 / Bath)).